A 444-amino-acid chain; its full sequence is C4-dicarboxylate transport protein 3 (444 aa).

Transmembrane regions (helical) follow at residues valine 22–proline 42, leucine 60–isoleucine 80, valine 95–valine 115, glycine 162–glycine 182, alanine 198–methionine 218, leucine 236–alanine 256, isoleucine 321–glycine 341, isoleucine 346–isoleucine 366, and leucine 399–leucine 419.

The protein belongs to the dicarboxylate/amino acid:cation symporter (DAACS) (TC 2.A.23) family.

The protein resides in the cell inner membrane. In terms of biological role, responsible for the transport of dicarboxylates such as succinate, fumarate, and malate from the periplasm across the membrane. In Bradyrhizobium diazoefficiens (strain JCM 10833 / BCRC 13528 / IAM 13628 / NBRC 14792 / USDA 110), this protein is C4-dicarboxylate transport protein 3.